Consider the following 486-residue polypeptide: Patatin-like phospholipase domain-containing protein 2 (486 aa).

Topologically, residues 1–8 are cytoplasmic; sequence MFPRETKW. The chain crosses the membrane as a helical span at residues 9 to 29; the sequence is NISFAGCGFLGVYHIGVASCL. Residues 10–179 form the PNPLA domain; the sequence is ISFAGCGFLG…SDNLPLYELK (170 aa). The GXGXXG motif lies at 14-19; the sequence is GCGFLG. Residues 30–42 lie on the Extracellular side of the membrane; the sequence is REHAPFLVANATH. A glycan (N-linked (GlcNAc...) asparagine) is linked at Asn-39. Residues 43–63 traverse the membrane as a helical segment; the sequence is IYGASAGALTATALVTGACLG. The GXSXG signature appears at 45–49; that stretch reads GASAG. Ser-47 serves as the catalytic Nucleophile. At 64–137 the chain is on the cytoplasmic side; sequence EAGANIIEVS…IISHFSSKDE (74 aa). Lys-92 participates in a covalent cross-link: Glycyl lysine isopeptide (Lys-Gly) (interchain with G-Cter in ubiquitin). A helical membrane pass occupies residues 138–158; that stretch reads LIQANVCSTFIPVYCGLIPPT. The Extracellular portion of the chain corresponds to 159–331; sequence LQGVRYVDGG…TTLSNMLPVR (173 aa). Asp-166 acts as the Proton acceptor in catalysis. The short motif at 166–168 is the DGA/G element; the sequence is DGG. A helical membrane pass occupies residues 332-352; it reads LATAMMVPYTLPLESAVSFTI. The Cytoplasmic segment spans residues 353 to 486; sequence RLLEWLPDVP…PQDPPGLPPC (134 aa). Ser-374 is subject to Phosphoserine; in vitro. 2 positions are modified to phosphoserine; by PKA: Ser-396 and Ser-406. A phosphoserine; in vitro mark is found at Ser-430 and Ser-468. Positions 465-476 are enriched in low complexity; the sequence is APASPTAADPAT. Residues 465–486 form a disordered region; it reads APASPTAADPATPQDPPGLPPC. Residues 477–486 are compositionally biased toward pro residues; that stretch reads PQDPPGLPPC.

Interacts with ABHD5; this association stimulates PNPLA2 triglyceride hydrolase activity. Interacts with SERPINF1; this interaction stimulates the phospholipase A2 activity of PNPLA2. Despite a colocalization in lipid droplets, it probably does not interact with PLIN. Interacts with PLIN5; prevents interaction with ABHD5. Interacts with FAF2. Phosphorylation at Ser-406 by PKA is increased during fasting and moderate intensity exercise, and moderately increases lipolytic activity. In terms of processing, ubiquitinated by PEX2 in response to reactive oxygen species (ROS), leading to its degradation. Ubiquitination is stimulated by LDAH. Expressed at high levels in white and brown adipose tissue, and to a lesser degree in testis and cardiac muscle. Barely detected in liver, spleen, thymus, kidney, skeletal muscle, and brain. Among the white adipose depots, gonadal fat showed the highest level of expression compared with inguinal and renal white adipose tissues.

It localises to the lipid droplet. Its subcellular location is the cell membrane. It is found in the cytoplasm. It carries out the reaction a triacylglycerol + H2O = a diacylglycerol + a fatty acid + H(+). The enzyme catalyses a triacylglycerol + H2O = a 1,2-diacylglycerol + a fatty acid + H(+). The catalysed reaction is a triacylglycerol + H2O = a 1,3-diacylglycerol + a fatty acid + H(+). It catalyses the reaction a triacyl-sn-glycerol + H2O = a 2,3-diacyl-sn-glycerol + a fatty acid + H(+). It carries out the reaction a triacyl-sn-glycerol + H2O = a 1,3-diacyl-sn-glycerol + a fatty acid + H(+). The enzyme catalyses 1,2,3-tri-(9Z-octadecenoyl)-glycerol + H2O = 1,3-di-(9Z-octadecenoyl)-glycerol + (9Z)-octadecenoate + H(+). The catalysed reaction is 1,2,3-tri-(9Z)-hexadecenoylglycerol + H2O = 1,3-di-(9Z)-hexadecenoylglycerol + (9Z)-hexadecenoate + H(+). It catalyses the reaction 1,2,3-tri-(9Z,12Z)-octadecadienoylglycerol + H2O = 1,3-di-(9Z,12Z)-octadecadienoylglycerol + (9Z,12Z)-octadecadienoate + H(+). It carries out the reaction 1,2,3-tri-(9Z,12Z,15Z)-octadecatrienoylglycerol + H2O = 1,3-di-(9Z,12Z,15Z)-octadecatrienoylglycerol + (9Z,12Z,15Z)-octadecatrienoate + H(+). The enzyme catalyses 1,3-di-(9Z)-octadecenoyl-2-hexadecanoylglycerol + H2O = 1,3-di-(9Z-octadecenoyl)-glycerol + hexadecanoate + H(+). The catalysed reaction is 1,2-di-(9Z)-octadecenoyl-3-hexadecanoyl-sn-glycerol + H2O = 1-(9Z)-octadecenoyl-3-hexadecanoyl-sn-glycerol + (9Z)-octadecenoate + H(+). It catalyses the reaction 1-hexadecanoyl-2,3-di-(9Z)-octadecenoyl-sn-glycerol + H2O = 1-hexadecanoyl-3-(9Z)-octadecenoyl-sn-glycerol + (9Z)-octadecenoate + H(+). It carries out the reaction 1,2,3-tri-(9Z-octadecenoyl)-glycerol + H2O = 2,3-di-(9Z)-octadecenoyl-sn-glycerol + (9Z)-octadecenoate + H(+). The enzyme catalyses 1,2,3-tri-(9Z)-hexadecenoylglycerol + H2O = 2,3-di-(9Z)-hexadecenoyl-sn-glycerol + (9Z)-hexadecenoate + H(+). The catalysed reaction is 1,2,3-tri-(9Z,12Z)-octadecadienoylglycerol + H2O = 2,3-di-(9Z,12Z)-octadecadienoyl-sn-glycerol + (9Z,12Z)-octadecadienoate + H(+). It catalyses the reaction 1,2,3-tri-(9Z,12Z,15Z)-octadecatrienoylglycerol + H2O = 2,3-di-(9Z,12Z,15Z)-octadecatrienoyl-sn-glycerol + (9Z,12Z,15Z)-octadecatrienoate + H(+). It carries out the reaction 1,3-di-(9Z)-octadecenoyl-2-hexadecanoylglycerol + H2O = 2-hexadecanoyl-3-(9Z)-octadecenoyl-sn-glycerol + (9Z)-octadecenoate + H(+). The enzyme catalyses 1-hexadecanoyl-2,3-di-(9Z)-octadecenoyl-sn-glycerol + H2O = 2,3-di-(9Z)-octadecenoyl-sn-glycerol + hexadecanoate + H(+). The catalysed reaction is 1,2-di-(9Z)-octadecenoyl-3-hexadecanoyl-sn-glycerol + H2O = 2-(9Z-octadecenoyl)-3-hexadecanoyl-sn-glycerol + (9Z)-octadecenoate + H(+). It catalyses the reaction 1,2-di-(9Z-octadecenoyl)-glycerol + (9Z)-octadecenoate + H(+) = 1,2,3-tri-(9Z-octadecenoyl)-glycerol + H2O. It carries out the reaction a 1-acylglycerol + a 1,3-diacylglycerol = a triacylglycerol + glycerol. The enzyme catalyses a 1-acylglycerol + a 1,2-diacylglycerol = a triacylglycerol + glycerol. The catalysed reaction is 2 a 1-acylglycerol = a 1,2-diacylglycerol + glycerol. It catalyses the reaction a triacylglycerol + all-trans-retinol = an all-trans-retinyl ester + a diacylglycerol. It carries out the reaction 1-(9Z-octadecenoyl)-glycerol + 1,3-di-(9Z-octadecenoyl)-glycerol = 1,2,3-tri-(9Z-octadecenoyl)-glycerol + glycerol. The enzyme catalyses 1-(9Z-octadecenoyl)-glycerol + 1,2-di-(9Z-octadecenoyl)-glycerol = 1,2,3-tri-(9Z-octadecenoyl)-glycerol + glycerol. The catalysed reaction is 2 1-(9Z-octadecenoyl)-glycerol = 1,2-di-(9Z-octadecenoyl)-glycerol + glycerol. It catalyses the reaction 1,2,3-tri-(9Z-octadecenoyl)-glycerol + all-trans-retinol = all-trans-retinyl 9Z-octadecenoate + di-(9Z)-octadecenoylglycerol. It carries out the reaction a 1,2-diacyl-sn-glycero-3-phosphocholine + H2O = a 1-acyl-sn-glycero-3-phosphocholine + a fatty acid + H(+). The enzyme catalyses 1,2,3-tri-(9Z-octadecenoyl)-glycerol + 9-hydroxy-octadecanoate = 9-(9Z-octadecenoyloxy)-octadecanoate + 2,3-di-(9Z)-octadecenoyl-sn-glycerol. The catalysed reaction is 1-hexadecanoyl-2,3-di-(9Z)-octadecenoyl-sn-glycerol + 9-hydroxy-octadecanoate = 9-hexadecanoyloxy-octadecanoate + 2,3-di-(9Z)-octadecenoyl-sn-glycerol. It catalyses the reaction 1,2,3-tri-(10Z)-heptadecenoylglycerol + 9-hydroxy-octadecanoate = 2,3-di-(10Z-heptadecenoyl)-sn-glycerol + 9-(10Z-heptadecenoyloxy)-octadecanoate. It carries out the reaction 1,2,3-tri-(9Z,12Z)-octadecadienoylglycerol + 9-hydroxy-octadecanoate = 2,3-di-(9Z,12Z)-octadecadienoyl-sn-glycerol + 9-(9Z,12Z-octadecadienoyloxy)-octadecanoate. The enzyme catalyses 1,2,3-tri-(9Z)-hexadecenoylglycerol + 9-hydroxy-octadecanoate = 2,3-di-(9Z)-hexadecenoyl-sn-glycerol + 9-(9Z-hexadecenoyloxy)-octadecanoate. The catalysed reaction is 9-hydroxy-octadecanoate + 1,2-di-(9Z-octadecenoyl)-sn-glycerol = 9-(9Z-octadecenoyloxy)-octadecanoate + 2-(9Z-octadecenoyl)-glycerol. It catalyses the reaction 1-hexadecanoyl-2,3-di-(9Z)-octadecenoyl-sn-glycerol + 9-hydroxy-octadecanoate = 1-hexadecanoyl-3-(9Z)-octadecenoyl-sn-glycerol + 9-(9Z-octadecenoyloxy)-octadecanoate. The protein operates within glycerolipid metabolism; triacylglycerol degradation. Stimulated by PKA-dependent PLIN phosphorylation. Its function is as follows. Catalyzes the initial step in triglyceride hydrolysis in adipocyte and non-adipocyte lipid droplets. Exhibits a strong preference for the hydrolysis of long-chain fatty acid esters at the sn-2 position of the glycerol backbone and acts coordinately with LIPE/HLS and DGAT2 within the lipolytic cascade. Also possesses acylglycerol transacylase and phospholipase A2 activities. Transfers fatty acid from triglyceride to retinol, hydrolyzes retinylesters, and generates 1,3-diacylglycerol from triglycerides. Regulates adiposome size and may be involved in the degradation of adiposomes. Catalyzes the formation of an ester bond between hydroxy fatty acids and fatty acids derived from triglycerides or diglycerides to generate fatty acid esters of hydroxy fatty acids (FAHFAs) in adipocytes. Acts antagonistically with LDAH in regulation of cellular lipid stores. Inhibits LDAH-stimulated lipid droplet fusion. May play an important role in energy homeostasis. May play a role in the response of the organism to starvation, enhancing hydrolysis of triglycerides and providing free fatty acids to other tissues to be oxidized in situations of energy depletion. This is Patatin-like phospholipase domain-containing protein 2 from Mus musculus (Mouse).